The chain runs to 287 residues: Urease accessory protein UreD (287 aa).

Belongs to the UreD family. As to quaternary structure, ureD, UreF and UreG form a complex that acts as a GTP-hydrolysis-dependent molecular chaperone, activating the urease apoprotein by helping to assemble the nickel containing metallocenter of UreC. The UreE protein probably delivers the nickel.

Its subcellular location is the cytoplasm. Required for maturation of urease via the functional incorporation of the urease nickel metallocenter. In Aliivibrio fischeri (strain MJ11) (Vibrio fischeri), this protein is Urease accessory protein UreD.